We begin with the raw amino-acid sequence, 79 residues long: Protein S100-G (79 aa).

Ser-2 bears the N-acetylserine mark. 2 EF-hand domains span residues 13–48 (IFEK…KGPS) and 45–79 (KGPS…KISQ). Residues Gln-26 and Glu-31 each coordinate Ca(2+). Ser-42 carries the phosphoserine modification. Asp-58, Asn-60, Asp-62, Glu-64, and Glu-69 together coordinate Ca(2+).

This sequence belongs to the S-100 family.

This chain is Protein S100-G (S100G), found in Bos taurus (Bovine).